The following is a 227-amino-acid chain: Adenosylcobinamide-GDP ribazoletransferase (227 aa).

5 helical membrane passes run C3 to F23, I26 to F46, G95 to E115, W117 to Y137, and A165 to F185.

Belongs to the CobS family. Mg(2+) serves as cofactor.

It localises to the cell membrane. The catalysed reaction is alpha-ribazole + adenosylcob(III)inamide-GDP = adenosylcob(III)alamin + GMP + H(+). It carries out the reaction alpha-ribazole 5'-phosphate + adenosylcob(III)inamide-GDP = adenosylcob(III)alamin 5'-phosphate + GMP + H(+). It participates in cofactor biosynthesis; adenosylcobalamin biosynthesis; adenosylcobalamin from cob(II)yrinate a,c-diamide: step 7/7. Its function is as follows. Joins adenosylcobinamide-GDP and alpha-ribazole to generate adenosylcobalamin (Ado-cobalamin). Also synthesizes adenosylcobalamin 5'-phosphate from adenosylcobinamide-GDP and alpha-ribazole 5'-phosphate. The protein is Adenosylcobinamide-GDP ribazoletransferase of Pyrobaculum islandicum (strain DSM 4184 / JCM 9189 / GEO3).